Reading from the N-terminus, the 996-residue chain is MEAAALLSPTATSRSPLPLLSTAPAAHRLHVLLPLSGRRRRLCLRSSPRPRGSLGCAGDCVVRSMGSSRERGVLVKTSSSSASVESATQEVGAASSGEWSGDAIRRRFLDFYAARGHKILPSSSLVPDDPTVFLTIAGMLQFKPIFLGKEPRRVPCATTSQKCIRTNDIENVGRTSRHQTFFEMLGNFSFGDYFKKEAITWAWELTTKEFGLPPERLWISVFQDDDEAFSIWHNEVGVPKERIKRLGEDDNFWTSGATGPCGPCSEIYYDFYPERGSSDADLGDDSRFIEFYNLVFMQYNKKDDGSLEPLKQKNIDTGMGLERMARILQKVPNNYETDLIFPIIEKAASMALVSYTTADDAMKTNLKIIGDHMRAVVYLISDGVIPSNIGRGYVVRRLIRRVVRTGRLIGIRGDGHGNSEGAFLPSLAEVAISLSTEIDPDVESRRKSILGELQREELRFVQTLERGEKLLDELLDEALSSAGNNGGKPCLSGKDVFLLYDTYGFPVEITAEISGERGVIVDMKGFDMEMENQRKQSQAAHNVVKLSVGNETEIVKSIPDTEFLGYDSLSATAVVKGLLVNGNSVNVVSEGSDVEIFLDRTPFYAESGGQVGDNGFLYVYGEEDAKQKAVIEINDVQKSLGNIFVHKGTIKQGSVEVGKEIDAAVDAKLRQGAKAHHTATHLLQSALKSIIGSETSQAGSLVAFDRLRFDFNFHRPLSEEELMKIESLVNQWVSSATHLETKVMDLQDAKNAGAIAMFGEKYGEQVRVVEVPGVSMELCGGTHVSNTAEIRGFKIISEQGIASGVRRIEAVAGDAFVEYVCARDNYMRCLCSSLKVKAEDVNGRVETILEELRTTRNEVSSLRSKIAVLKAASLANKATTIDNTRVVVENMGDVDADGLKSAAEYLVDTLEDPAAVILGSSPGDGKVSLVAAFSPGVVKMGIQAGKFVGGIAKLCGGGGGGKPNFAQAGGRKPENLPGALEKARDEIVAAISSKSS.

The Zn(2+) site is built by histidine 677, histidine 681, cysteine 779, and histidine 783.

The protein belongs to the class-II aminoacyl-tRNA synthetase family. As to quaternary structure, monomer. Requires Zn(2+) as cofactor.

It is found in the plastid. The protein localises to the chloroplast. It localises to the mitochondrion. The enzyme catalyses tRNA(Ala) + L-alanine + ATP = L-alanyl-tRNA(Ala) + AMP + diphosphate. Its function is as follows. Catalyzes the attachment of alanine to tRNA(Ala) in a two-step reaction: alanine is first activated by ATP to form Ala-AMP and then transferred to the acceptor end of tRNA(Ala). Also edits incorrectly charged tRNA(Ala) via its editing domain. The protein is Alanine--tRNA ligase, chloroplastic/mitochondrial of Oryza sativa subsp. japonica (Rice).